Reading from the N-terminus, the 111-residue chain is HTH-type transcriptional regulator SinR (111 aa).

The 56-residue stretch at 6–61 folds into the HTH cro/C1-type domain; that stretch reads IKQYRKEKGYSLSELAEKAGVAKSYLSSIERNLQTNPSIQFLEKVSAVLDVSVHTL. Positions 17-36 form a DNA-binding region, H-T-H motif; that stretch reads LSELAEKAGVAKSYLSSIER. Residues 65-103 form the Sin domain; sequence KHETEYDGQLDSEWEKLVRDAMTSGVSKKQFREFLDYQK.

In terms of assembly, homotetramer in the absence of SinI. Heterodimer with SinI. Interaction with SinI disrupts the SinR tetramer and its repressor activity. Interacts with hpr.

Negative as well as positive regulator of alternate developmental processes that are induced at the end of vegetative growth in response to nutrient depletion. Binds to the alkaline protease (aprE) gene at two sites. Also acts as a repressor of the key sporulation gene spo0A. Negatively regulates transcription of the eps operon, which is responsible for the biosynthesis of an exopolysaccharide involved in biofilm formation; therefore it could govern the transition between a state in which bacteria swim or swarm and a state in which bacteria assemble into multicellular communities. Acts with Hpr as a corepressor of epr expression. Also negatively regulates transcription of the lutABC operon, which is required for lactate utilization. Repressor activity is regulated by SinI. The protein is HTH-type transcriptional regulator SinR (sinR) of Bacillus subtilis (strain 168).